The chain runs to 726 residues: Catalase-peroxidase (726 aa).

The tract at residues 1–33 (MSTSDDIHNTTATGKCPFHQGGHDQSAGAGTTT) is disordered. The tryptophyl-tyrosyl-methioninium (Trp-Tyr) (with M-252) cross-link spans 105–226 (WHGAGTYRSI…LGATEMGLIY (122 aa)). The Proton acceptor role is filled by His-106. Residues 226-252 (YVNPEGPDHSGEPLSAAAAIRATFGNM) constitute a cross-link (tryptophyl-tyrosyl-methioninium (Tyr-Met) (with W-105)). His-267 serves as a coordination point for heme b.

This sequence belongs to the peroxidase family. Peroxidase/catalase subfamily. In terms of assembly, homodimer or homotetramer. It depends on heme b as a cofactor. Post-translationally, formation of the three residue Trp-Tyr-Met cross-link is important for the catalase, but not the peroxidase activity of the enzyme.

The enzyme catalyses H2O2 + AH2 = A + 2 H2O. It carries out the reaction 2 H2O2 = O2 + 2 H2O. Its function is as follows. Bifunctional enzyme with both catalase and broad-spectrum peroxidase activity. This chain is Catalase-peroxidase, found in Shigella boydii serotype 18 (strain CDC 3083-94 / BS512).